A 199-amino-acid polypeptide reads, in one-letter code: Pneumococcal vaccine antigen A homolog (199 aa).

It localises to the cell surface. This chain is Pneumococcal vaccine antigen A homolog (pvaA), found in Streptococcus pyogenes serotype M18 (strain MGAS8232).